We begin with the raw amino-acid sequence, 486 residues long: MKALDQLTFDNRFARLGDAFSTQVLPEPIADPRLVVASESAMALLDLDPAQAELPVFAELFSGHKLWEEADPRAMVYSGHQFGSYNPRLGDGRGLLLAEVLNDAGEHWDLHLKGAGQTPYSRMGDGRAVLRSSIREFLASEALHALGIATSRALCVIGSSTPVWRETRESAAMLTRLAQSHVRFGHFEYFYYTKQPEQQRVLIDHVLEQHYPECREAEQPYLAMFRTIVERNAELIARWQAYGFCHGVMNTDNMSILGITFDFGPYAFLDDFDANFICNHSDDRGRYSYANQVPIAHWNLSALAQALTTVIEVEPLKEALGLFLPLYQAHYLDLMRRRLGLTTAEDDDMVLVERLLQCMQRGGVDYSLFFRKLGEQPVAEALKVARDDFIDLAGFDAWGADYLARCGREPGNAEGRRERMHAVNPLYVLRNYLAQKAIEAAEAGDYSEVRRLHQVLARPFEEQPGMQAYAERPPEWGKHLEISCSS.

ATP contacts are provided by glycine 90, glycine 92, arginine 93, lysine 113, aspartate 125, glycine 126, arginine 176, and arginine 183. Residue aspartate 252 is the Proton acceptor of the active site. Mg(2+) is bound by residues asparagine 253 and aspartate 262. Residue aspartate 262 coordinates ATP.

Belongs to the SELO family. Mg(2+) serves as cofactor. It depends on Mn(2+) as a cofactor.

It carries out the reaction L-seryl-[protein] + ATP = 3-O-(5'-adenylyl)-L-seryl-[protein] + diphosphate. It catalyses the reaction L-threonyl-[protein] + ATP = 3-O-(5'-adenylyl)-L-threonyl-[protein] + diphosphate. The catalysed reaction is L-tyrosyl-[protein] + ATP = O-(5'-adenylyl)-L-tyrosyl-[protein] + diphosphate. The enzyme catalyses L-histidyl-[protein] + UTP = N(tele)-(5'-uridylyl)-L-histidyl-[protein] + diphosphate. It carries out the reaction L-seryl-[protein] + UTP = O-(5'-uridylyl)-L-seryl-[protein] + diphosphate. It catalyses the reaction L-tyrosyl-[protein] + UTP = O-(5'-uridylyl)-L-tyrosyl-[protein] + diphosphate. Functionally, nucleotidyltransferase involved in the post-translational modification of proteins. It can catalyze the addition of adenosine monophosphate (AMP) or uridine monophosphate (UMP) to a protein, resulting in modifications known as AMPylation and UMPylation. The polypeptide is Protein nucleotidyltransferase YdiU (Pseudomonas putida (strain ATCC 47054 / DSM 6125 / CFBP 8728 / NCIMB 11950 / KT2440)).